The following is a 328-amino-acid chain: 4-hydroxythreonine-4-phosphate dehydrogenase (328 aa).

2 residues coordinate substrate: H134 and T135. The a divalent metal cation site is built by H164, H209, and H264. K272, N281, and R290 together coordinate substrate.

This sequence belongs to the PdxA family. In terms of assembly, homodimer. Zn(2+) serves as cofactor. The cofactor is Mg(2+). Co(2+) is required as a cofactor.

The protein localises to the cytoplasm. The catalysed reaction is 4-(phosphooxy)-L-threonine + NAD(+) = 3-amino-2-oxopropyl phosphate + CO2 + NADH. Its pathway is cofactor biosynthesis; pyridoxine 5'-phosphate biosynthesis; pyridoxine 5'-phosphate from D-erythrose 4-phosphate: step 4/5. Catalyzes the NAD(P)-dependent oxidation of 4-(phosphooxy)-L-threonine (HTP) into 2-amino-3-oxo-4-(phosphooxy)butyric acid which spontaneously decarboxylates to form 3-amino-2-oxopropyl phosphate (AHAP). The protein is 4-hydroxythreonine-4-phosphate dehydrogenase of Shewanella denitrificans (strain OS217 / ATCC BAA-1090 / DSM 15013).